Here is a 269-residue protein sequence, read N- to C-terminus: Tryptophan synthase alpha chain (269 aa).

Catalysis depends on proton acceptor residues E50 and D61.

This sequence belongs to the TrpA family. In terms of assembly, tetramer of two alpha and two beta chains.

It catalyses the reaction (1S,2R)-1-C-(indol-3-yl)glycerol 3-phosphate + L-serine = D-glyceraldehyde 3-phosphate + L-tryptophan + H2O. The protein operates within amino-acid biosynthesis; L-tryptophan biosynthesis; L-tryptophan from chorismate: step 5/5. Its function is as follows. The alpha subunit is responsible for the aldol cleavage of indoleglycerol phosphate to indole and glyceraldehyde 3-phosphate. The sequence is that of Tryptophan synthase alpha chain from Francisella tularensis subsp. tularensis (strain WY96-3418).